The primary structure comprises 384 residues: 5-amino-6-(D-ribitylamino)uracil--L-tyrosine 4-hydroxyphenyl transferase 2 (384 aa).

Positions 53–286 constitute a Radical SAM core domain; that stretch reads VSYVVNRNIY…IAISRIILHT (234 aa). The [4Fe-4S] cluster site is built by C67, C71, and C74.

Belongs to the radical SAM superfamily. CofH family. Consists of two subunits, CofG and CofH. [4Fe-4S] cluster serves as cofactor.

It carries out the reaction 5-amino-6-(D-ribitylamino)uracil + L-tyrosine + S-adenosyl-L-methionine = 5-amino-5-(4-hydroxybenzyl)-6-(D-ribitylimino)-5,6-dihydrouracil + 2-iminoacetate + 5'-deoxyadenosine + L-methionine + H(+). It functions in the pathway cofactor biosynthesis; coenzyme F0 biosynthesis. In terms of biological role, catalyzes the radical-mediated synthesis of 5-amino-5-(4-hydroxybenzyl)-6-(D-ribitylimino)-5,6-dihydrouracil from 5-amino-6-(D-ribitylamino)uracil and L-tyrosine. This is 5-amino-6-(D-ribitylamino)uracil--L-tyrosine 4-hydroxyphenyl transferase 2 from Methanosarcina acetivorans (strain ATCC 35395 / DSM 2834 / JCM 12185 / C2A).